The primary structure comprises 532 residues: Phosphoenolpyruvate carboxykinase (ATP) (532 aa).

Arg58, Tyr194, and Lys200 together coordinate substrate. Residues Lys200, His220, and 236–244 (GLSGTGKTT) contribute to the ATP site. Positions 200 and 220 each coordinate Mn(2+). Residue Asp257 coordinates Mn(2+). ATP contacts are provided by residues Glu285, Arg322, 442–443 (RV), and Thr448. Arg322 serves as a coordination point for substrate.

It belongs to the phosphoenolpyruvate carboxykinase (ATP) family. Mn(2+) is required as a cofactor.

The protein localises to the cytoplasm. It carries out the reaction oxaloacetate + ATP = phosphoenolpyruvate + ADP + CO2. It participates in carbohydrate biosynthesis; gluconeogenesis. In terms of biological role, involved in the gluconeogenesis. Catalyzes the conversion of oxaloacetate (OAA) to phosphoenolpyruvate (PEP) through direct phosphoryl transfer between the nucleoside triphosphate and OAA. The polypeptide is Phosphoenolpyruvate carboxykinase (ATP) (Rubrobacter xylanophilus (strain DSM 9941 / JCM 11954 / NBRC 16129 / PRD-1)).